The primary structure comprises 529 residues: Cytochrome P450 monooxygenase atmQ (529 aa).

2 helical membrane-spanning segments follow: residues 22-42 (YPFA…QQLA) and 51-71 (SWVN…IAAF). Heme is bound at residue C467.

It belongs to the cytochrome P450 family. It depends on heme as a cofactor.

It localises to the membrane. It participates in secondary metabolite biosynthesis. Cytochrome P450 monooxygenase; part of the ATM2 gene cluster that mediates the biosynthesis of aflatrem, a tremorgenic mycotoxin with acute neurotoxic effects. Synthesis of geranylgeranyl diphosphate (GGPP) by AtmG (a GGPP synthase) precedes condensation of GGPP with indole 3-glycerol phosphate, followed by epoxidation and cyclization by AtmM (a FAD-dependent monooxygenase) and AtmC (a prenyltransferase) to produce paspaline. AtmB is also essential for paspaline production, but its exact role has not been identified yet. AtmP, a cytochrome P450 monooxygenase, subsequently converts paspaline to 13-desoxypaxilline via PC-M6 by removal of the C-30 methyl group and oxidation at C-10. AtmQ, a cytochrome P450 monooxygenase, then catalyzes the oxidation of 13-desoxypaxilline, first at C-7 to produce paspalicine and then at C-13 to form paspalinine. Finally, AtmD prenylates paspalinine to form aflatrem. The protein is Cytochrome P450 monooxygenase atmQ of Aspergillus flavus.